The chain runs to 37 residues: Putative preoptic regulatory factor 1 (37 aa).

2 consecutive propeptides follow at residues 1-7 (MPYSLQP) and 18-37 (FPLC…PPDL).

Belongs to the GnRH family. As to expression, preoptic area and testis.

The protein resides in the secreted. Its function is as follows. Precursor for a gonadotropin regulatory hormone (GNRH) related decapeptide. This Rattus norvegicus (Rat) protein is Putative preoptic regulatory factor 1 (Porf1).